A 391-amino-acid chain; its full sequence is Small ribosomal subunit protein bS1 (391 aa).

S1 motif domains follow at residues 16–90, 108–173, 194–262, and 279–348; these read GDKV…LSRR, NEII…LSRK, GDVI…LSIK, and NDVI…LSIK.

Belongs to the bacterial ribosomal protein bS1 family.

Functionally, binds mRNA; thus facilitating recognition of the initiation point. It is needed to translate mRNA with a short Shine-Dalgarno (SD) purine-rich sequence. This is Small ribosomal subunit protein bS1 (rpsA) from Staphylococcus aureus (strain N315).